A 598-amino-acid polypeptide reads, in one-letter code: Elongation factor 4 (598 aa).

The tr-type G domain maps to 4–186 (INIRNFAIIA…AIVSRLPAPS (183 aa)). Residues 16-21 (DHGKST) and 133-136 (NKID) contribute to the GTP site.

The protein belongs to the TRAFAC class translation factor GTPase superfamily. Classic translation factor GTPase family. LepA subfamily.

The protein resides in the cell inner membrane. It catalyses the reaction GTP + H2O = GDP + phosphate + H(+). Its function is as follows. Required for accurate and efficient protein synthesis under certain stress conditions. May act as a fidelity factor of the translation reaction, by catalyzing a one-codon backward translocation of tRNAs on improperly translocated ribosomes. Back-translocation proceeds from a post-translocation (POST) complex to a pre-translocation (PRE) complex, thus giving elongation factor G a second chance to translocate the tRNAs correctly. Binds to ribosomes in a GTP-dependent manner. The polypeptide is Elongation factor 4 (Ehrlichia ruminantium (strain Gardel)).